Here is a 133-residue protein sequence, read N- to C-terminus: MTLNLSVLTPNRIVWDSEVEEIVLSTNSGQIGILPNHAPIATAVDIGILRIRLNDQWLTMALMGGFARIGNNEITVLVNDAEKGSDINPQEAQQTLEIAEANVKKAEGRRQKIEANLALRRARTRVEASNPIS.

The protein belongs to the ATPase epsilon chain family. As to quaternary structure, F-type ATPases have 2 components, CF(1) - the catalytic core - and CF(0) - the membrane proton channel. CF(1) has five subunits: alpha(3), beta(3), gamma(1), delta(1), epsilon(1). CF(0) has three main subunits: a, b and c.

It localises to the plastid. It is found in the chloroplast thylakoid membrane. Its function is as follows. Produces ATP from ADP in the presence of a proton gradient across the membrane. This is ATP synthase epsilon chain, chloroplastic from Solanum lycopersicum (Tomato).